We begin with the raw amino-acid sequence, 359 residues long: 3-dehydroquinate synthase (359 aa).

NAD(+)-binding positions include 71–76, 104–108, 128–129, lysine 141, lysine 150, and 168–171; these read DGEQYK, GVVGD, TT, and TLNT. The Zn(2+) site is built by glutamate 183, histidine 247, and histidine 264.

Belongs to the sugar phosphate cyclases superfamily. Dehydroquinate synthase family. The cofactor is Co(2+). Zn(2+) serves as cofactor. It depends on NAD(+) as a cofactor.

The protein resides in the cytoplasm. It carries out the reaction 7-phospho-2-dehydro-3-deoxy-D-arabino-heptonate = 3-dehydroquinate + phosphate. It participates in metabolic intermediate biosynthesis; chorismate biosynthesis; chorismate from D-erythrose 4-phosphate and phosphoenolpyruvate: step 2/7. In terms of biological role, catalyzes the conversion of 3-deoxy-D-arabino-heptulosonate 7-phosphate (DAHP) to dehydroquinate (DHQ). The protein is 3-dehydroquinate synthase of Coxiella burnetii (strain Dugway 5J108-111).